We begin with the raw amino-acid sequence, 258 residues long: MRQDQRSYNELRPIKITRNFIKYAEGSCLIEMGNTKVIITATIDDKVPPFKKGSGEGWITAEYSMLPRATQQRNVRDINKLRLSGRSHEIQRLIGRALRAGINFKALGERVIILDCDVIQADGGTRTASITGGFIAMFDACKKLYDDKVIENFPITDFVAAVSVGICDGVEMLDLCFEEDSKASVDMNLVMNDKGEFIEIQGTAEGGAFTQEQFEKLLELGKQGIQKIIEIQREVLGEDSKLIGSVPKDEKTSGCDQE.

Phosphate contacts are provided by residues Arg-86 and 124 to 126; that span reads GTR.

Belongs to the RNase PH family. Homohexameric ring arranged as a trimer of dimers.

The catalysed reaction is tRNA(n+1) + phosphate = tRNA(n) + a ribonucleoside 5'-diphosphate. Phosphorolytic 3'-5' exoribonuclease that plays an important role in tRNA 3'-end maturation. Removes nucleotide residues following the 3'-CCA terminus of tRNAs; can also add nucleotides to the ends of RNA molecules by using nucleoside diphosphates as substrates, but this may not be physiologically important. Probably plays a role in initiation of 16S rRNA degradation (leading to ribosome degradation) during starvation. The protein is Ribonuclease PH of Caldicellulosiruptor saccharolyticus (strain ATCC 43494 / DSM 8903 / Tp8T 6331).